Reading from the N-terminus, the 834-residue chain is Enhancer of filamentation 1 (834 aa).

One can recognise an SH3 domain in the interval 3–65; it reads ARNLMARALY…PGNRVKLLIG (63 aa). A phosphotyrosine mark is found at Tyr92, Tyr164, Tyr166, Tyr177, Tyr189, Tyr214, and Tyr223. Ser296 is modified (phosphoserine). Tyr317 is subject to Phosphotyrosine. 2 disordered regions span residues 328 to 402 and 584 to 624; these read PPAE…DKRL and SQMP…SERS. Basic and acidic residues predominate over residues 332–344; it reads TSEKANPEERDGV. A Caspase cleavage related site motif is present at residues 360–363; that stretch reads DVVD. Over residues 368-397 the composition is skewed to low complexity; the sequence is LSFSSTGSTRSNMSTSSTTSKESSVSASPS. Ser369 bears the Phosphoserine mark. The segment at 710–760 is divergent helix-loop-helix motif; the sequence is FYYDQCETHYISLLNAIDALFSCVSSAQPPRIFVAHSKFVILSAHKLVFIG. The required for interaction with PLK1 stretch occupies residues 710 to 834; that stretch reads FYYDQCETHY…KRSLLEMATF (125 aa). Ser780 bears the Phosphoserine mark. Thr804 carries the phosphothreonine modification.

This sequence belongs to the CAS family. Homodimer. Forms heterodimers with BCAR1/p130cas. Forms complexes with PTK2B/RAFTK, adapter protein CRKL and LYN kinase. Part of a complex composed of NEDD9, AURKA and CTTN; within the complex NEDD9 acts as a scaffold protein and is required for complex formation. Part of a ternary complex composed of SMAD3, ITCH/AIP4 and NEDD9/HEF1; within the complex NEDD9/HEF1 interacts (via N-terminus) with ITCH/AIP4; the complex mediates ubiquitination and proteasomal degradation of NEDD9/HEF1. Interacts with ID2. Interacts with CTTN (via N-terminus). Interacts with MICAL. Interacts with TXNL4/DIM1. Interacts with BCAR3 (via Ras-GEF domain). Interacts with SH2D3C isoform 1 and isoform 2. Interacts with BCAR3. Interacts with ECT2. Interacts with PTPN11/SHP-2 (via SH2 domains); the interaction is enhanced when NEDD9/CAS-L is tyrosine phosphorylated. Interacts (via C-terminus) with PLK1 (via polo box domain). Interacts with NKX2-5. Interacts with SMAD3; the interaction is inhibited by oxidation of NEDD9. Interacts with ABL1; interaction is induced by CXCL12-mediated phosphorylation of NEDD/HEF1. Interacts (via SH3 domain) with PTK2/FAK. Interacts with FYN; in the presence of PTK2. Interacts with INPPL1/SHIP2. Polyubiquitinated by ITCH/AIP4, leading to proteasomal degradation. Post-translationally, PTK2/FAK1 phosphorylates the protein at the YDYVHL motif (conserved among all cas proteins) following integrin stimulation. The SRC family kinases (FYN, SRC, LCK and CRK) are recruited to the phosphorylated sites and can phosphorylate other tyrosine residues. Ligation of either integrin beta-1 or B-cell antigen receptor on tonsillar B-cells and B-cell lines promotes tyrosine phosphorylation and both integrin and BCR-mediated tyrosine phosphorylation requires an intact actin network. Phosphorylation is required to recruit NEDD9 to T-cell receptor microclusters at the periphery of newly formed immunological synapses. In fibroblasts transformation with oncogene v-ABL results in an increase in tyrosine phosphorylation. Transiently phosphorylated following CD3 cross-linking and this phosphorylated form binds to CRKL and C3G. A mutant lacking the SH3 domain is phosphorylated upon CD3 cross-linking but not upon integrin beta-1 cross-linking. Tyrosine phosphorylation occurs upon stimulation of the G-protein coupled C1a calcitonin receptor. Calcitonin-stimulated tyrosine phosphorylation is mediated by calcium- and protein kinase C-dependent mechanisms and requires the integrity of the actin cytoskeleton. Phosphorylation at Ser-369 induces proteasomal degradation. Phosphorylated by LYN. Phosphorylation at Ser-780 by CSNK1D or CSNK1E, or phosphorylation of Thr-804 by CSNK1E enhances the interaction of NEDD9 with PLK1.

The protein resides in the cytoplasm. The protein localises to the cell cortex. Its subcellular location is the nucleus. It is found in the golgi apparatus. It localises to the cell projection. The protein resides in the lamellipodium. The protein localises to the cell junction. Its subcellular location is the focal adhesion. It is found in the cytoskeleton. It localises to the spindle pole. The protein resides in the cilium. The protein localises to the cilium basal body. Its subcellular location is the basolateral cell membrane. Functionally, negatively regulates embryonic fibroblast migration. May play an important role in integrin beta-1 or B cell antigen receptor (BCR) mediated signaling in B- and T-cells. Integrin beta-1 stimulation leads to recruitment of various proteins including CRKl and SHPTP2 to the tyrosine phosphorylated form. Promotes adhesion and migration of lymphocytes; as a result required for the correct migration of lymphocytes to the spleen and other secondary lymphoid organs. Plays a role in the organization of T-cell F-actin cortical cytoskeleton and the centralization of T-cell receptor microclusters at the immunological synapse. Negatively regulates cilia outgrowth in polarized cysts. Modulates cilia disassembly via activation of AURKA-mediated phosphorylation of HDAC6 and subsequent deacetylation of alpha-tubulin. In conjunction with NKX2-5, positively regulates transcription of genes such as COL3A1 and MMP2, resulting in increased pulmonary endothelial fibrosis in response to hypoxia. Positively regulates RANKL-induced osteoclastogenesis. Required for the maintenance of hippocampal dendritic spines in the dentate gyrus and CA1 regions, thereby involved in spatial learning and memory. The chain is Enhancer of filamentation 1 from Canis lupus familiaris (Dog).